Here is a 227-residue protein sequence, read N- to C-terminus: Ribose-5-phosphate isomerase A (227 aa).

Substrate is bound by residues 26–29, 82–85, and 95–98; these read TGST, DGAD, and KGGG. Glutamate 104 functions as the Proton acceptor in the catalytic mechanism. Lysine 122 is a binding site for substrate.

Belongs to the ribose 5-phosphate isomerase family. In terms of assembly, homodimer.

It carries out the reaction aldehydo-D-ribose 5-phosphate = D-ribulose 5-phosphate. It participates in carbohydrate degradation; pentose phosphate pathway; D-ribose 5-phosphate from D-ribulose 5-phosphate (non-oxidative stage): step 1/1. Functionally, catalyzes the reversible conversion of ribose-5-phosphate to ribulose 5-phosphate. This chain is Ribose-5-phosphate isomerase A, found in Streptococcus pyogenes serotype M1.